The primary structure comprises 351 residues: Dihydroorotate dehydrogenase (quinone) (351 aa).

Residues 65-69 and Thr-89 contribute to the FMN site; that span reads AGLDK. Residue Lys-69 coordinates substrate. 114–118 is a binding site for substrate; that stretch reads NRLGF. Residues Asn-150 and Asn-183 each coordinate FMN. A substrate-binding site is contributed by Asn-183. Catalysis depends on Ser-186, which acts as the Nucleophile. A substrate-binding site is contributed by Asn-188. FMN contacts are provided by Lys-228 and Thr-256. Substrate is bound at residue 257-258; sequence NT. FMN-binding positions include Gly-279, Gly-308, and 329 to 330; that span reads YT.

Belongs to the dihydroorotate dehydrogenase family. Type 2 subfamily. Monomer. FMN is required as a cofactor.

It localises to the cell membrane. It carries out the reaction (S)-dihydroorotate + a quinone = orotate + a quinol. The protein operates within pyrimidine metabolism; UMP biosynthesis via de novo pathway; orotate from (S)-dihydroorotate (quinone route): step 1/1. Catalyzes the conversion of dihydroorotate to orotate with quinone as electron acceptor. This is Dihydroorotate dehydrogenase (quinone) from Acidovorax ebreus (strain TPSY) (Diaphorobacter sp. (strain TPSY)).